Consider the following 259-residue polypeptide: MFDIGVNLTSTQFAKDRDKVVKRAREAGISGMLITGTNALESQQALSLARQHANYCWSTAGVHPHHASEWSAETAATLRRLAESPLVVAIGECGLDFNRNFSQPEQQVYAFNAQLALAAELSLPVFLHCREAHERFITILKPWLPSLKAAVLHCFTGARAELESCLAEGLSIGITGWICDERRGQELRELVPLIPADRLLLETDAPWLLPRDMRPRPPSRRNEPCFLPHIVQQVALLRGDDVDELAAQTALNARALFGL.

A divalent metal cation contacts are provided by E92, H128, and H153.

It belongs to the metallo-dependent hydrolases superfamily. TatD-type hydrolase family. TatD subfamily. As to quaternary structure, monomer. It depends on Mg(2+) as a cofactor.

The protein localises to the cytoplasm. Its function is as follows. 3'-5' exonuclease that prefers single-stranded DNA and RNA. May play a role in the H(2)O(2)-induced DNA damage repair. In Erwinia amylovora (strain ATCC 49946 / CCPPB 0273 / Ea273 / 27-3), this protein is 3'-5' ssDNA/RNA exonuclease TatD.